The primary structure comprises 314 residues: Putative 4-hydroxy-2-oxoglutarate aldolase, mitochondrial (314 aa).

50–51 (TN) provides a ligand contact to substrate. Residue Lys171 is the Schiff-base intermediate with substrate of the active site.

The protein belongs to the DapA family.

It carries out the reaction (4S)-4-hydroxy-2-oxoglutarate = glyoxylate + pyruvate. The enzyme catalyses (4R)-4-hydroxy-2-oxoglutarate = glyoxylate + pyruvate. In terms of biological role, may catalyze the final step in the metabolic pathway of hydroxyproline. This is Putative 4-hydroxy-2-oxoglutarate aldolase, mitochondrial from Coccidioides immitis (strain RS) (Valley fever fungus).